A 187-amino-acid chain; its full sequence is MSTGNFDLNELKRRMQGATQALKHELGGLRTGRASASMVEPVQVEAYGSHMPLNQLATVSVPEPRLLSVQVWDRTMVKAVEKAIVDSNLGLSPATEGQVIRLRIPELNQERRKELVKVAHKYAEAARVAVRHVRRDGLDTVKKLEKNHEISEDDQERLATDIQKATDSVISEIDQLLAAKEKEILTV.

This sequence belongs to the RRF family.

The protein resides in the cytoplasm. In terms of biological role, responsible for the release of ribosomes from messenger RNA at the termination of protein biosynthesis. May increase the efficiency of translation by recycling ribosomes from one round of translation to another. The polypeptide is Ribosome-recycling factor (Bradyrhizobium sp. (strain BTAi1 / ATCC BAA-1182)).